Consider the following 904-residue polypeptide: Translation initiation factor IF-2 (904 aa).

Disordered stretches follow at residues 134–248 (RQRN…GSHV) and 267–315 (HLSA…FERP). Residues 136–177 (RNLDEQQRLAESDRVRDEEIQRKRDEEQAAKDRAEAERKAAE) show a composition bias toward basic and acidic residues. Composition is skewed to low complexity over residues 178-230 (EAAA…STPA) and 285-303 (GRPG…RGSN). Positions 403 to 572 (TRPPVVTIMG…SLQAEVLELK (170 aa)) constitute a tr-type G domain. The tract at residues 412-419 (GHVDHGKT) is G1. 412 to 419 (GHVDHGKT) lines the GTP pocket. Positions 437 to 441 (GITQH) are G2. The G3 stretch occupies residues 458–461 (DTPG). GTP contacts are provided by residues 458-462 (DTPGH) and 512-515 (NKID). The G4 stretch occupies residues 512 to 515 (NKID). Positions 548–550 (SAK) are G5.

It belongs to the TRAFAC class translation factor GTPase superfamily. Classic translation factor GTPase family. IF-2 subfamily.

It localises to the cytoplasm. Functionally, one of the essential components for the initiation of protein synthesis. Protects formylmethionyl-tRNA from spontaneous hydrolysis and promotes its binding to the 30S ribosomal subunits. Also involved in the hydrolysis of GTP during the formation of the 70S ribosomal complex. This is Translation initiation factor IF-2 from Xanthomonas oryzae pv. oryzae (strain PXO99A).